The primary structure comprises 447 residues: UDP-N-acetylmuramoylalanine--D-glutamate ligase (447 aa).

Position 112–118 (112–118 (GTNGKST)) interacts with ATP.

This sequence belongs to the MurCDEF family.

It localises to the cytoplasm. It catalyses the reaction UDP-N-acetyl-alpha-D-muramoyl-L-alanine + D-glutamate + ATP = UDP-N-acetyl-alpha-D-muramoyl-L-alanyl-D-glutamate + ADP + phosphate + H(+). It functions in the pathway cell wall biogenesis; peptidoglycan biosynthesis. Cell wall formation. Catalyzes the addition of glutamate to the nucleotide precursor UDP-N-acetylmuramoyl-L-alanine (UMA). In Legionella pneumophila (strain Lens), this protein is UDP-N-acetylmuramoylalanine--D-glutamate ligase.